A 400-amino-acid chain; its full sequence is MGRAKRVVLAYSGGVDTSVCIPYLKQEWGVEEVITLAADLGQGDELGPIRQKALDSGAVESLVIDATAEFVRDYAFPAIQANSLYEGRYPLSTALARPLIAKLLVEAAAKYGADAVAHGCTGKGNDQVRFDVSIAALNPDLKVLAPAREWGMSREETIAYGERFGIPAPVKKSSPYSIDRNLLGRSIEAGPLEDPLHEPLEEVYALTKAIANTPDEPAYIELGFDQGLPVTLNGQALAPVALIQQLNAIAGEHGIGRIDMIENRLVGIKSREIYETPALLVLIQAHQDLESLVLTADVSQYKRGIENSWSNLVYNGLWYSPLKAALDAFIQQTQQRVTGTVRLRLFKGNATVVGRSSEQSLYSPDMATYGAEDRFDHKAAEGFIYVWGMPTRIWSQTHRA.

ATP contacts are provided by residues 10–18 and A38; that span reads AYSGGVDTS. Y89 contacts L-citrulline. G119 contacts ATP. L-aspartate-binding residues include T121, N125, and D126. An L-citrulline-binding site is contributed by N125. Positions 129, 177, 186, 262, and 274 each coordinate L-citrulline.

This sequence belongs to the argininosuccinate synthase family. Type 1 subfamily. In terms of assembly, homotetramer.

Its subcellular location is the cytoplasm. It carries out the reaction L-citrulline + L-aspartate + ATP = 2-(N(omega)-L-arginino)succinate + AMP + diphosphate + H(+). It participates in amino-acid biosynthesis; L-arginine biosynthesis; L-arginine from L-ornithine and carbamoyl phosphate: step 2/3. In Synechococcus elongatus (strain ATCC 33912 / PCC 7942 / FACHB-805) (Anacystis nidulans R2), this protein is Argininosuccinate synthase.